The following is a 304-amino-acid chain: Murein tetrapeptide carboxypeptidase (304 aa).

The Nucleophile role is filled by Ser106. Catalysis depends on charge relay system residues Glu200 and His270.

Belongs to the peptidase S66 family.

It localises to the cytoplasm. The enzyme catalyses N-acetyl-D-glucosaminyl-N-acetylmuramoyl-L-alanyl-meso-2,6-diaminoheptanedioyl-D-alanine + H2O = N-acetyl-D-glucosaminyl-N-acetylmuramoyl-L-alanyl-meso-2,6-diaminoheptanedioate + D-alanine. It functions in the pathway cell wall biogenesis; peptidoglycan recycling. Inhibited by beta-lactams containing a D-amino acid side chain. Releases the terminal D-alanine residue from the cytoplasmic tetrapeptide recycling product L-Ala-gamma-D-Glu-meso-Dap-D-Ala. To a lesser extent, can also cleave D-Ala from murein derivatives containing the tetrapeptide, i.e. MurNAc-tetrapeptide, UDP-MurNAc-tetrapeptide, GlcNAc-MurNAc-tetrapeptide, and GlcNAc-anhMurNAc-tetrapeptide. Does not act on murein sacculi or cross-linked muropeptides. The tripeptides produced by the LcdA reaction can then be reused as peptidoglycan building blocks; LcdA is thereby involved in murein recycling. Is also essential for viability during stationary phase. This Escherichia coli (strain K12) protein is Murein tetrapeptide carboxypeptidase (ldcA).